Reading from the N-terminus, the 353-residue chain is DNA-directed RNA polymerase subunit alpha (353 aa).

An alpha N-terminal domain (alpha-NTD) region spans residues 1 to 234; the sequence is MVQEKVRVST…DLFIPFLHTE (234 aa). The segment at 266–353 is alpha C-terminal domain (alpha-CTD); the sequence is KKIALKSIFI…LAQSIYSESG (88 aa).

The protein belongs to the RNA polymerase alpha chain family. In plastids the minimal PEP RNA polymerase catalytic core is composed of four subunits: alpha, beta, beta', and beta''. When a (nuclear-encoded) sigma factor is associated with the core the holoenzyme is formed, which can initiate transcription.

It localises to the plastid. It is found in the chloroplast. The enzyme catalyses RNA(n) + a ribonucleoside 5'-triphosphate = RNA(n+1) + diphosphate. DNA-dependent RNA polymerase catalyzes the transcription of DNA into RNA using the four ribonucleoside triphosphates as substrates. The sequence is that of DNA-directed RNA polymerase subunit alpha from Panax ginseng (Korean ginseng).